A 717-amino-acid polypeptide reads, in one-letter code: Trimethylamine N-oxide transport system permease protein TmoV (717 aa).

17 helical membrane-spanning segments follow: residues 10 to 30 (FFQW…IEVP), 69 to 89 (LPPL…FLMN), 120 to 140 (FMTF…ETIV), 153 to 173 (WAEL…ILGY), 175 to 195 (LSGK…SVFG), 206 to 226 (FILV…VMAF), 238 to 258 (ILLV…IVLF), 265 to 285 (AVII…LLGL), 319 to 339 (ILIG…ISAF), 355 to 375 (QLNI…AILL), 402 to 422 (ILFF…GSFY), 452 to 472 (IWDT…VDVL), 488 to 508 (LVLV…LVVG), 527 to 547 (LYMA…VGII), 574 to 594 (LIPV…AVIV), 643 to 663 (MLGL…GAFI), and 683 to 703 (GIGL…DHLI). The region spanning 200–379 (SMQTLSFILV…LIAILLDKMS (180 aa)) is the ABC transmembrane type-1 1 domain. An ABC transmembrane type-1 2 domain is found at 523–703 (ALVTLYMATF…FIGLIFDHLI (181 aa)).

The protein belongs to the binding-protein-dependent transport system permease family. The complex is probably composed of two ATP-binding proteins (TmoW), two transmembrane proteins (TmoV) and a solute-binding protein (TmoX).

It is found in the cell inner membrane. In terms of biological role, part of the ABC transporter complex TmoXWV involved in trimethylamine N-oxide (TMAO) import. Responsible for the translocation of the substrate across the membrane. The chain is Trimethylamine N-oxide transport system permease protein TmoV from Pelagibacter ubique (strain HTCC1062).